A 678-amino-acid chain; its full sequence is Chloride channel protein ClC-Kb (678 aa).

Residues Met1–Trp50 lie on the Cytoplasmic side of the membrane. The next 2 membrane-spanning stretches (helical) occupy residues Tyr51–Tyr82 and Leu91–Ser111. The segment at residues Pro116–Lys127 is an intramembrane region (helical). Ser121 contributes to the chloride binding site. Helical transmembrane passes span Ile141–Thr160 and Leu161–Leu180. The helical intramembrane region spans Ala203–Ile224. The helical transmembrane segment at Tyr236–Val255 threads the bilayer. Residues Glu259, Glu261, Asp278, and Glu281 each coordinate Ca(2+). 2 consecutive transmembrane segments (helical) span residues Ile282 to Thr310 and Pro325 to Pro342. Residues Ala349–Thr360 constitute an intramembrane region (helical). A glycan (N-linked (GlcNAc...) asparagine) is linked at Asn364. 2 consecutive transmembrane segments (helical) span residues Gly400 to Pro420 and Met421 to Leu440. Residue Phe426 participates in chloride binding. Residues Gly464–Val496 constitute an intramembrane region (helical). A helical transmembrane segment spans residues Pro500 to Tyr520. Residues Asp521–Phe678 lie on the Cytoplasmic side of the membrane. CBS domains are found at residues Met551 to Ser612 and Asp620 to Phe678.

It belongs to the chloride channel (TC 2.A.49) family. CLCNKB subfamily. In terms of assembly, homodimer. Interacts with BSND. In terms of processing, N-glycosylated. As to expression, expressed predominantly in the kidney.

It localises to the basolateral cell membrane. It catalyses the reaction chloride(in) = chloride(out). The catalysed reaction is iodide(out) = iodide(in). The enzyme catalyses nitrate(in) = nitrate(out). It carries out the reaction bromide(in) = bromide(out). Functionally, anion-selective channel permeable to small monovalent anions with ion selectivity for chloride &gt; bromide &gt; nitrate &gt; iodide. Forms a homodimeric channel where each subunit has its own ion conduction pathway. May conduct double-barreled currents controlled by two types of gates, two fast gates that control each subunit independently and a slow common gate that opens and shuts off both subunits simultaneously. Assembles with the regulatory subunit BSND/Barttin for sorting at the basolateral plasma membrane domain and functional switch to the ion conducting state. CLCNKB:BSND channels display mostly a linear current-voltage relationship controlled by common gate. Mediates chloride conductance along nephron segments, namely the thick ascending limb of Henle's loop, convoluted tubule and the collecting duct, contributing to the maintenance of systemic acid-base and electrolyte homeostasis. Conducts chloride currents in the stria vascularis of the inner ear to establish the endocochlear potential necessary for normal hearing. This chain is Chloride channel protein ClC-Kb (CLCNKB), found in Oryctolagus cuniculus (Rabbit).